The primary structure comprises 648 residues: S-M checkpoint control protein rad4 (648 aa).

BRCT domains lie at 2-92 and 96-185; these read GSSK…DDGL and KHFL…YFQL. The Nuclear localization signal motif lies at 242 to 249; that stretch reads KRGKKRDR. 2 consecutive BRCT domains span residues 298-384 and 392-486; these read NEAK…EHAL and SLVP…SPWA. The residue at position 592 (Ser-592) is a Phosphoserine. Positions 643 to 648 match the Nuclear localization signal motif; sequence RKLRRR.

Interacts with drc1/sld2. Interacts (via BRCT1,2 domains) with crb2; a single rad4 molecule interacts simultaneously with both 'Thr-187' phosphorylation sites in a crb2 dimer.

It localises to the nucleus. Essential component for DNA replication and also the checkpoint control system which couples S and M phases. May directly or indirectly interact with chromatin proteins to form the complex required for the initiation and/or progression of DNA synthesis. Interacts simultaneously with both 'Thr-187' phosphorylation sites in a crb2 dimer for establishing the DNA checkpoint. This Schizosaccharomyces pombe (strain 972 / ATCC 24843) (Fission yeast) protein is S-M checkpoint control protein rad4 (rad4).